A 370-amino-acid polypeptide reads, in one-letter code: DNA replication and repair protein RecF (370 aa).

An ATP-binding site is contributed by 30–37 (GQNGMGKT).

The protein belongs to the RecF family.

The protein resides in the cytoplasm. Functionally, the RecF protein is involved in DNA metabolism; it is required for DNA replication and normal SOS inducibility. RecF binds preferentially to single-stranded, linear DNA. It also seems to bind ATP. The polypeptide is DNA replication and repair protein RecF (Bacteroides fragilis (strain YCH46)).